The sequence spans 91 residues: Acylphosphatase (91 aa).

Residues 5–91 (RAHVFVSGRV…EGVDGFEVRW (87 aa)) form the Acylphosphatase-like domain. Active-site residues include R20 and N38.

Belongs to the acylphosphatase family.

It carries out the reaction an acyl phosphate + H2O = a carboxylate + phosphate + H(+). In Haloarcula marismortui (strain ATCC 43049 / DSM 3752 / JCM 8966 / VKM B-1809) (Halobacterium marismortui), this protein is Acylphosphatase (acyP).